The primary structure comprises 301 residues: MKWLQIHITVDQEQVEFTETLLMSLGAVSVTLDDAEDQALLEPLPGETPLWNKVIVTGIYQQDEQDPIDVDTLEAFLKAQLPDVPMRHEELEDQVWERAWMDYYEPIQIGEKFWIVPEWLEPPEADATNIKLDPGLAFGTGNHASTFLCLQWLGKTDVKDKIVIDYGCGSGILGVAALLLGAKKVYATDIDPQAVLATKQNAELNGVLDRLYVGLPEEFDQEFKPQQADVLVANILAGPLMALAPEFAKLLKSDGDFALAGVIEEQVADVSGVYSEFFDILDVEKREENWCRISGKRKTTN.

Positions 146, 167, 189, and 234 each coordinate S-adenosyl-L-methionine.

It belongs to the methyltransferase superfamily. PrmA family.

It localises to the cytoplasm. The catalysed reaction is L-lysyl-[protein] + 3 S-adenosyl-L-methionine = N(6),N(6),N(6)-trimethyl-L-lysyl-[protein] + 3 S-adenosyl-L-homocysteine + 3 H(+). Its function is as follows. Methylates ribosomal protein L11. This is Ribosomal protein L11 methyltransferase from Acinetobacter baumannii (strain AB307-0294).